A 40-amino-acid polypeptide reads, in one-letter code: Photosystem II reaction center protein J (40 aa).

The helical transmembrane segment at 8–28 (IPLWIIGTVAGIPVIGLIGIF) threads the bilayer.

It belongs to the PsbJ family. As to quaternary structure, PSII is composed of 1 copy each of membrane proteins PsbA, PsbB, PsbC, PsbD, PsbE, PsbF, PsbH, PsbI, PsbJ, PsbK, PsbL, PsbM, PsbT, PsbX, PsbY, PsbZ, Psb30/Ycf12, at least 3 peripheral proteins of the oxygen-evolving complex and a large number of cofactors. It forms dimeric complexes.

The protein resides in the plastid. Its subcellular location is the chloroplast thylakoid membrane. One of the components of the core complex of photosystem II (PSII). PSII is a light-driven water:plastoquinone oxidoreductase that uses light energy to abstract electrons from H(2)O, generating O(2) and a proton gradient subsequently used for ATP formation. It consists of a core antenna complex that captures photons, and an electron transfer chain that converts photonic excitation into a charge separation. The polypeptide is Photosystem II reaction center protein J (Pelargonium hortorum (Common geranium)).